The following is a 152-amino-acid chain: Transcriptional repressor NrdR (152 aa).

A zinc finger lies at 3 to 34; the sequence is CPFCGHADTQVVDSRVSEDGASIRRRRRCLEC. Residues 49–139 enclose the ATP-cone domain; it reads PQVVKQDGHR…VYRSFQDVAE (91 aa).

It belongs to the NrdR family. It depends on Zn(2+) as a cofactor.

Its function is as follows. Negatively regulates transcription of bacterial ribonucleotide reductase nrd genes and operons by binding to NrdR-boxes. The sequence is that of Transcriptional repressor NrdR from Laribacter hongkongensis (strain HLHK9).